Here is a 34-residue protein sequence, read N- to C-terminus: MINKTTIKTVLITLGVLAAVNKVSALRSVKRLIS.

The helical transmembrane segment at 10–26 (VLITLGVLAAVNKVSAL) threads the bilayer.

Its subcellular location is the virion membrane. In terms of biological role, exolysin that catalyzes the cleavage of the host peptidoglycans during virus entry. The chain is Peptidoglycan hydrolase P7 (VII) from Pseudoalteromonas espejiana (Bacteriophage PM2).